Reading from the N-terminus, the 388-residue chain is Type II secretion system protein F (388 aa).

Residues 1 to 28 (MTEGDSARQVRQQLREQGLTPLEVNETT) form a disordered region. Topologically, residues 1-153 (MTEGDSARQV…HMRTKLLQAM (153 aa)) are cytoplasmic. 3 residues coordinate Ca(2+): E79, N133, and D137. The chain crosses the membrane as a helical span at residues 154–174 (IYPIVLTLVAVGVISILLTAV). At 175–205 (VPKVVAQFEHMGQQLPATTRFLIGTSELMQH) the chain is on the periplasmic side. A helical transmembrane segment spans residues 206–226 (YGLWFLLLLFIGGFVWRWWLT). The Cytoplasmic portion of the chain corresponds to 227–350 (DEKRRRHWHQ…QDREFETQVN (124 aa)). The helical transmembrane segment at 351 to 371 (IALGVFEPLLVVSMAGVVLFI) threads the bilayer. Residues 372–388 (VMSILQPILELNNMVNL) lie on the Periplasmic side of the membrane.

Belongs to the GSP F family. Type II secretion system is composed of four main components: the outer membrane complex, the inner membrane complex, the cytoplasmic secretion ATPase and the periplasm-spanning pseudopilus. Homodimer. Interacts with ExeE and ExeL components.

Its subcellular location is the cell inner membrane. Its function is as follows. Component of the type II secretion system inner membrane complex required for the energy-dependent secretion of extracellular factors such as proteases and toxins from the periplasm. In Aeromonas hydrophila, this protein is Type II secretion system protein F (exeF).